Consider the following 258-residue polypeptide: E3 ubiquitin ligase TRIM40 (258 aa).

The RING-type zinc-finger motif lies at 14 to 56 (CPICQESLKEAVSTNCGHLFCRVCLTQHVEKASASGVFCCPLC). The B box-type zinc finger occupies 66–107 (GTGYICPNHQKRVCRFCEESRLLLCVECLVSPEHMSHHELTI). The Zn(2+) site is built by Cys-71, His-74, Cys-93, and His-99. Residues 107–159 (IENALSHYKERLNRRSRKLRKDIAELQRLKAQQEKKLQALQFQVDHGNHRLEA) are a coiled coil.

The protein belongs to the TRIM/RBCC family. As to quaternary structure, interacts with NEDD8. Highly expressed in normal gastrointestinal epithelia but that is down-regulated in gastrointestinal carcinomas and chronic inflammatory lesions of the gastrointestinal tract.

The enzyme catalyses S-ubiquitinyl-[E2 ubiquitin-conjugating enzyme]-L-cysteine + [acceptor protein]-L-lysine = [E2 ubiquitin-conjugating enzyme]-L-cysteine + N(6)-ubiquitinyl-[acceptor protein]-L-lysine.. E3 ubiquitin-protein ligase that plays a role in the limitation of the innate immune response. Mediates inhibition of the RLR signaling pathway by ubiquitinating RIGI and IFIH1 receptors, leading to their proteasomal degradation. Also promotes the neddylation of IKBKG/NEMO, stabilizing NFKBIA, and thereby inhibiting of NF-kappa-B nuclear translocation and activation. This chain is E3 ubiquitin ligase TRIM40 (TRIM40), found in Homo sapiens (Human).